The primary structure comprises 144 residues: Large ribosomal subunit protein uL13 (144 aa).

The protein belongs to the universal ribosomal protein uL13 family. Part of the 50S ribosomal subunit.

Functionally, this protein is one of the early assembly proteins of the 50S ribosomal subunit, although it is not seen to bind rRNA by itself. It is important during the early stages of 50S assembly. The sequence is that of Large ribosomal subunit protein uL13 from Magnetococcus marinus (strain ATCC BAA-1437 / JCM 17883 / MC-1).